A 103-amino-acid polypeptide reads, in one-letter code: Protein translation factor SUI1 homolog (103 aa).

This sequence belongs to the SUI1 family.

In Methanocaldococcus jannaschii (strain ATCC 43067 / DSM 2661 / JAL-1 / JCM 10045 / NBRC 100440) (Methanococcus jannaschii), this protein is Protein translation factor SUI1 homolog.